The chain runs to 516 residues: MVWEVKTNQMPNAVQKLLLVMDKRAPGMSDSLELLQCNENLPSSPGYNSCDEHMELDDLPELQAVQSDPTQSAIYQLSSDVSHQEYPRSSWSQNTSDIPENTHREDEVDWLTELANIATSPQSPLMQCSFYNRSSPVHIIATSKSLHSYARPPPVSSSSKSGPAFPHDHWKEETPVRHERANSESESGIFCMSSLSDDDDLGWCNSWPSTIWHCFLKGTRLCFHKESNKEWQDVEDFARAASCDNEEEIQMGTHKGYGSDGLKLLSHEESVSFGESVLKLTFDPGTVEDGLLTVECKLDHPFYVKNKGWSSFYPSLTVVQHGIPCCEIHIGDVCLPPGHPDAINFDDSGVFDTFKSYDFTPMDSSAVYVLSSMARQRRASLSCGGGPGTGQEFSGSEFSKSCGSPGSSQLSSSSLYAKAVKSHSSGTVSATSPNKCKRPMNAFMLFAKKYRVEYTQMYPGKDNRAISVILGDRWKKMKNEERRMYTLEAKALAEEQKRLNPDCWKRKRTNSGSQQH.

The disordered stretch occupies residues 150 to 182 (ARPPPVSSSSKSGPAFPHDHWKEETPVRHERAN). Residues 156-165 (SSSSKSGPAF) are compositionally biased toward low complexity. Positions 166 to 182 (PHDHWKEETPVRHERAN) are enriched in basic and acidic residues. One can recognise an AXH domain in the interval 203 to 345 (WCNSWPSTIW…PPGHPDAINF (143 aa)). The HMG box DNA-binding region spans 436–504 (CKRPMNAFML…EQKRLNPDCW (69 aa)).

In terms of assembly, binds TCF4. Binds RB1. Binds the second PAH repeat of SIN3A. Ubiquitinated by the CTLH E3 ubiquitin-protein ligase complex, leading to subsequent proteasomal degradation.

The protein resides in the nucleus. In terms of biological role, transcriptional repressor that binds to the promoter region of target genes. Plays a role in the regulation of the cell cycle and of the Wnt pathway. Binds preferentially to the sequence 5'-TTCATTCATTCA-3'. Binding to the histone H1.0 promoter is enhanced by interaction with RB1. Disrupts the interaction between DNA and TCF4. The polypeptide is HMG box-containing protein 1 (Hbp1) (Mus musculus (Mouse)).